Here is a 157-residue protein sequence, read N- to C-terminus: Endoribonuclease YbeY (157 aa).

The Zn(2+) site is built by H118, H122, and H128.

It belongs to the endoribonuclease YbeY family. The cofactor is Zn(2+).

Its subcellular location is the cytoplasm. In terms of biological role, single strand-specific metallo-endoribonuclease involved in late-stage 70S ribosome quality control and in maturation of the 3' terminus of the 16S rRNA. The polypeptide is Endoribonuclease YbeY (Shewanella loihica (strain ATCC BAA-1088 / PV-4)).